Reading from the N-terminus, the 182-residue chain is Bifunctional dihydrofolate reductase-thymidylate synthase (182 aa).

In terms of domain architecture, DHFR spans 1–182; that stretch reads AICACCKVLN…YFTRINNAYT (182 aa). 25–31 is an NADP(+) binding site; the sequence is GLGNAGG. D40 is a binding site for substrate. NADP(+) contacts are provided by residues 93–95 and 114–117; these read KTS and LSRT. 3 residues coordinate substrate: I154, Y160, and T175. Residue 155-162 participates in NADP(+) binding; it reads GGASVYKE.

This sequence in the N-terminal section; belongs to the dihydrofolate reductase family. In the C-terminal section; belongs to the thymidylate synthase family. As to quaternary structure, homodimer.

It catalyses the reaction (6S)-5,6,7,8-tetrahydrofolate + NADP(+) = 7,8-dihydrofolate + NADPH + H(+). The enzyme catalyses dUMP + (6R)-5,10-methylene-5,6,7,8-tetrahydrofolate = 7,8-dihydrofolate + dTMP. Its pathway is cofactor biosynthesis; tetrahydrofolate biosynthesis; 5,6,7,8-tetrahydrofolate from 7,8-dihydrofolate: step 1/1. Functionally, bifunctional enzyme. Involved in de novo dTMP biosynthesis. Key enzyme in folate metabolism. Catalyzes an essential reaction for de novo glycine and purine synthesis, DNA precursor synthesis, and for the conversion of dUMP to dTMP. This is Bifunctional dihydrofolate reductase-thymidylate synthase from Plasmodium vinckei.